A 288-amino-acid polypeptide reads, in one-letter code: MDRSMVKGPLYKQFDLERKSARQAEARLSLRLQRLEIICLYHVKSLAREQRQLQKELQRLQQDIIKKRFSSYVGHEIQKRSKDVVTFLPPTGQRHAVPEPKIRTLKNSVTQEVKTKIPVPSLHDPVLKDTLRSQEHLLSHGERTSCFKEGSPQGQEGEPTNPLKGVDPSKDVSVPCHDQELSTNKTEDSGVSSQDGERGSAPANETRSENASQKPRGDADVQNSPSSVDYAGSFKDERTKPSFLELFEKAKNAHYVRHRVPPESERLLSIGEIFGHKHYSLPRTGETL.

A coiled-coil region spans residues 16–69; the sequence is LERKSARQAEARLSLRLQRLEIICLYHVKSLAREQRQLQKELQRLQQDIIKKRF. A disordered region spans residues 141 to 235; that stretch reads GERTSCFKEG…SSVDYAGSFK (95 aa). Positions 177–188 are enriched in basic and acidic residues; it reads HDQELSTNKTED. A compositionally biased stretch (polar residues) spans 203 to 213; it reads ANETRSENASQ.

The protein is Coiled-coil domain-containing protein 190 (Ccdc190) of Mus musculus (Mouse).